The chain runs to 361 residues: Phosphoserine aminotransferase (361 aa).

The L-glutamate site is built by Ser9 and Arg42. Residues 76 to 77 (AR), Trp103, Thr153, Asp173, and Gln196 contribute to the pyridoxal 5'-phosphate site. At Lys197 the chain carries N6-(pyridoxal phosphate)lysine. 238-239 (NT) contributes to the pyridoxal 5'-phosphate binding site.

The protein belongs to the class-V pyridoxal-phosphate-dependent aminotransferase family. SerC subfamily. In terms of assembly, homodimer. The cofactor is pyridoxal 5'-phosphate.

It localises to the cytoplasm. It catalyses the reaction O-phospho-L-serine + 2-oxoglutarate = 3-phosphooxypyruvate + L-glutamate. The catalysed reaction is 4-(phosphooxy)-L-threonine + 2-oxoglutarate = (R)-3-hydroxy-2-oxo-4-phosphooxybutanoate + L-glutamate. The protein operates within amino-acid biosynthesis; L-serine biosynthesis; L-serine from 3-phospho-D-glycerate: step 2/3. It functions in the pathway cofactor biosynthesis; pyridoxine 5'-phosphate biosynthesis; pyridoxine 5'-phosphate from D-erythrose 4-phosphate: step 3/5. Functionally, catalyzes the reversible conversion of 3-phosphohydroxypyruvate to phosphoserine and of 3-hydroxy-2-oxo-4-phosphonooxybutanoate to phosphohydroxythreonine. The protein is Phosphoserine aminotransferase of Wigglesworthia glossinidia brevipalpis.